Consider the following 256-residue polypeptide: Trans-aconitate 2-methyltransferase (256 aa).

Belongs to the methyltransferase superfamily. Tam family.

The protein localises to the cytoplasm. The enzyme catalyses trans-aconitate + S-adenosyl-L-methionine = (E)-3-(methoxycarbonyl)pent-2-enedioate + S-adenosyl-L-homocysteine. Its function is as follows. Catalyzes the S-adenosylmethionine monomethyl esterification of trans-aconitate. The polypeptide is Trans-aconitate 2-methyltransferase (Rhodopseudomonas palustris (strain BisB5)).